Consider the following 334-residue polypeptide: Hydroxyproline O-arabinosyltransferase NOD3 (334 aa).

Residues 1–18 (LLMVLGFFFATYNLVSMI) form a helical; Signal-anchor membrane-spanning segment.

This sequence belongs to the RDN family.

The protein resides in the golgi apparatus membrane. The catalysed reaction is trans-4-hydroxy-L-prolyl-[protein] + UDP-beta-L-arabinofuranose = O-(beta-L-arabinofuranosyl)-trans-4-hydroxy-L-prolyl-[protein] + UDP + H(+). In terms of biological role, probable glycosyltransferase involved in the O-arabinosylation of several proteins including extensins and small signaling peptides. Catalyzes the transfer of the initial L-arabinose to the hydroxyl group of Hyp residues. Probably involved in the arabinosylation of CLAVATA3/ESR-related (CLE) signaling peptides that move from root to shoot, to interact with receptor kinase signaling that regulates nodulation. Involved in long distance nodulation signaling events. Involved in the autoregulation of nodulation (AON), a long distance systemic signaling from root to shoot and back again, which allows legumes to limit the number of root nodules formed based on available nitrogen and previous rhizobial colonization. The sequence is that of Hydroxyproline O-arabinosyltransferase NOD3 from Pisum sativum (Garden pea).